The chain runs to 215 residues: Probable transaldolase (215 aa).

Lysine 83 serves as the catalytic Schiff-base intermediate with substrate.

The protein belongs to the transaldolase family. Type 3B subfamily.

The protein resides in the cytoplasm. The catalysed reaction is D-sedoheptulose 7-phosphate + D-glyceraldehyde 3-phosphate = D-erythrose 4-phosphate + beta-D-fructose 6-phosphate. Its pathway is carbohydrate degradation; pentose phosphate pathway; D-glyceraldehyde 3-phosphate and beta-D-fructose 6-phosphate from D-ribose 5-phosphate and D-xylulose 5-phosphate (non-oxidative stage): step 2/3. Functionally, transaldolase is important for the balance of metabolites in the pentose-phosphate pathway. This chain is Probable transaldolase, found in Anaeromyxobacter sp. (strain Fw109-5).